The sequence spans 940 residues: Isoleucine--tRNA ligase (940 aa).

The 'HIGH' region motif lies at 58 to 68 (PYANGSIHIGH). Glutamate 564 lines the L-isoleucyl-5'-AMP pocket. The 'KMSKS' region signature appears at 605-609 (KMSKS). Lysine 608 is a binding site for ATP. The Zn(2+) site is built by cysteine 903, cysteine 906, cysteine 923, and cysteine 926.

The protein belongs to the class-I aminoacyl-tRNA synthetase family. IleS type 1 subfamily. As to quaternary structure, monomer. Zn(2+) is required as a cofactor.

Its subcellular location is the cytoplasm. The catalysed reaction is tRNA(Ile) + L-isoleucine + ATP = L-isoleucyl-tRNA(Ile) + AMP + diphosphate. In terms of biological role, catalyzes the attachment of isoleucine to tRNA(Ile). As IleRS can inadvertently accommodate and process structurally similar amino acids such as valine, to avoid such errors it has two additional distinct tRNA(Ile)-dependent editing activities. One activity is designated as 'pretransfer' editing and involves the hydrolysis of activated Val-AMP. The other activity is designated 'posttransfer' editing and involves deacylation of mischarged Val-tRNA(Ile). This Shewanella amazonensis (strain ATCC BAA-1098 / SB2B) protein is Isoleucine--tRNA ligase.